The sequence spans 338 residues: Phenylalanine--tRNA ligase alpha subunit (338 aa).

Residue glutamate 252 coordinates Mg(2+).

The protein belongs to the class-II aminoacyl-tRNA synthetase family. Phe-tRNA synthetase alpha subunit type 1 subfamily. As to quaternary structure, tetramer of two alpha and two beta subunits. Mg(2+) is required as a cofactor.

It is found in the cytoplasm. The catalysed reaction is tRNA(Phe) + L-phenylalanine + ATP = L-phenylalanyl-tRNA(Phe) + AMP + diphosphate + H(+). The chain is Phenylalanine--tRNA ligase alpha subunit from Pseudomonas putida (strain ATCC 700007 / DSM 6899 / JCM 31910 / BCRC 17059 / LMG 24140 / F1).